Consider the following 125-residue polypeptide: Small ribosomal subunit protein uS13 (125 aa).

It belongs to the universal ribosomal protein uS13 family. In terms of assembly, part of the 30S ribosomal subunit. Forms a loose heterodimer with protein S19. Forms two bridges to the 50S subunit in the 70S ribosome.

In terms of biological role, located at the top of the head of the 30S subunit, it contacts several helices of the 16S rRNA. In the 70S ribosome it contacts the 23S rRNA (bridge B1a) and protein L5 of the 50S subunit (bridge B1b), connecting the 2 subunits; these bridges are implicated in subunit movement. Contacts the tRNAs in the A and P-sites. This chain is Small ribosomal subunit protein uS13, found in Rickettsia prowazekii (strain Madrid E).